Consider the following 182-residue polypeptide: Plasmolipin (182 aa).

The tract at residues 1-20 (MAEFPSKVSTRTSSPAQGVG) is disordered. Residues 1–35 (MAEFPSKVSTRTSSPAQGVGASVSAMRPDLGFVRS) lie on the Cytoplasmic side of the membrane. The span at 7 to 16 (KVSTRTSSPA) shows a compositional bias: polar residues. Position 9 is a phosphoserine (Ser-9). The MARVEL domain maps to 32–166 (FVRSALGVLA…SAFFSFQAWR (135 aa)). Residues 36 to 56 (ALGVLALLQLVLGLLVWALIA) traverse the membrane as a helical segment. At 57 to 68 (DTPYHLYPAYGW) the chain is on the extracellular side. Residues 69–89 (VMFVAVFLWLVTIVFFIIYLF) traverse the membrane as a helical segment. Topologically, residues 90 to 99 (QLHMKLYMVP) are cytoplasmic. The helical transmembrane segment at 100–120 (WPLVLLVFFVAATVLYITAFV) threads the bilayer. Residues 121-141 (ACAAAVDLTSLRGSRPYNQRS) lie on the Extracellular side of the membrane. The chain crosses the membrane as a helical span at residues 142–162 (AASFFACLVMIAYGLSAFFSF). Over 163–182 (QAWRGVGSNAATSQMAGGYS) the chain is Cytoplasmic.

The protein belongs to the MAL family. In terms of assembly, forms oligomers. Post-translationally, phosphorylated. Detected to the sciatic nerve, brain and kidney. In the sciatic nerve, found in Schwann cells; in the brain, in developing oligodendrocytes, especially of the corpus callosum, of cortical white matter, in the optic nerve and in the stratum radiatum and stratum oriens of the hippocampus. In kidney, segregated to the apical surface of renal tubular epithelia.

The protein resides in the cell membrane. It is found in the myelin membrane. The protein localises to the apical cell membrane. In terms of biological role, main component of the myelin sheath that plays an important role in myelin membrane biogenesis and myelination. Plays an essential function in apical endocytosis. Regulates epithelial development through the regulation of apical endocytosis. Part of the intracellular machinery that mediates basolateral-to-apical transport of ICAM-1, an essential adhesion receptor in epithelial cells, from the subapical compartment in hepatic epithelial cells. The sequence is that of Plasmolipin (Pllp) from Rattus norvegicus (Rat).